We begin with the raw amino-acid sequence, 423 residues long: Gamma-glutamyl phosphate reductase (423 aa).

The protein belongs to the gamma-glutamyl phosphate reductase family.

The protein resides in the cytoplasm. It catalyses the reaction L-glutamate 5-semialdehyde + phosphate + NADP(+) = L-glutamyl 5-phosphate + NADPH + H(+). Its pathway is amino-acid biosynthesis; L-proline biosynthesis; L-glutamate 5-semialdehyde from L-glutamate: step 2/2. Functionally, catalyzes the NADPH-dependent reduction of L-glutamate 5-phosphate into L-glutamate 5-semialdehyde and phosphate. The product spontaneously undergoes cyclization to form 1-pyrroline-5-carboxylate. The protein is Gamma-glutamyl phosphate reductase of Pseudomonas entomophila (strain L48).